We begin with the raw amino-acid sequence, 373 residues long: Septin homolog spn3 (373 aa).

The Septin-type G domain occupies 10–286; that stretch reads KGIPLNLMVV…ETYRTEKLST (277 aa). A G1 motif region spans residues 20–27; it reads GDVGLGRT. 20-27 serves as a coordination point for GTP; it reads GDVGLGRT. A G3 motif region spans residues 79 to 82; the sequence is DTPH. Positions 161 to 164 are G4 motif; the sequence is AKAD. GTP-binding positions include 162–170 and Arg235; that span reads KADSLTAQE. Ser303 bears the Phosphoserine mark. Positions 311–357 form a coiled coil; it reads EDRLRAIELSVQKEIEEKRRQLLAREEALRALEEKLAASTAAMANAS.

Belongs to the TRAFAC class TrmE-Era-EngA-EngB-Septin-like GTPase superfamily. Septin GTPase family. As to quaternary structure, component of the septin complex composed of two copies of each spn1, spn2, spn3 and spn4.

It is found in the cytoplasm. Its subcellular location is the cell cortex. Plays a role in the cell cycle. Involved in a late stage of septum formation leading to the separation of the daughter cells. The protein is Septin homolog spn3 (spn3) of Schizosaccharomyces pombe (strain 972 / ATCC 24843) (Fission yeast).